Reading from the N-terminus, the 318-residue chain is Olfactory receptor 52D1 (318 aa).

At 1 to 28 (MSDSNLSDNHLPDTFFLTGIPGLEAAHF) the chain is on the extracellular side. An N-linked (GlcNAc...) asparagine glycan is attached at Asn5. The helical transmembrane segment at 29–49 (WIAIPFCAMYLVALVGNAALI) threads the bilayer. Residues 50–57 (LVIAMDNA) lie on the Cytoplasmic side of the membrane. A helical transmembrane segment spans residues 58-78 (LHAPMYLFLCLLSLTDLALSS). Over 79–102 (TTVPKMLAILWLHAGEISFGGCLA) the chain is Extracellular. Cys100 and Cys192 form a disulfide bridge. A helical membrane pass occupies residues 103–123 (QMFCVHSIYALESSILLAMAF). Over 124 to 142 (DRYVAICNPLRYTTILNHA) the chain is Cytoplasmic. Residues 143–163 (VIGRIGFVGLFRSVAIVSPFI) traverse the membrane as a helical segment. The Extracellular portion of the chain corresponds to 164-199 (FLLRRLPYCGHRVMTHTYCEHMGIARLACANITVNI). Residues 200 to 220 (VYGLTVALLAMGLDSILIAIS) traverse the membrane as a helical segment. The Cytoplasmic segment spans residues 221-240 (YGFILHAVFHLPSHDAQHKA). Residues 241-261 (LSTCGSHIGIILVFYIPAFFS) traverse the membrane as a helical segment. Over 262 to 277 (FLTHRFGHHEVPKHVH) the chain is Extracellular. A helical transmembrane segment spans residues 278–298 (IFLANLYVLVPPVLNPILYGA). The Cytoplasmic segment spans residues 299 to 318 (RTKEIRSRLLKLLHLGKTSI).

It belongs to the G-protein coupled receptor 1 family.

The protein resides in the cell membrane. Odorant receptor. The polypeptide is Olfactory receptor 52D1 (OR52D1) (Homo sapiens (Human)).